The primary structure comprises 216 residues: UPF0301 protein Nham_3550 (216 aa).

A compositionally biased stretch (basic residues) spans 1-10; that stretch reads MSAARKRPGT. The interval 1–25 is disordered; that stretch reads MSAARKRPGTGRRQTDDADTGAPDQ.

It belongs to the UPF0301 (AlgH) family.

In Nitrobacter hamburgensis (strain DSM 10229 / NCIMB 13809 / X14), this protein is UPF0301 protein Nham_3550.